We begin with the raw amino-acid sequence, 407 residues long: Argininosuccinate synthase (407 aa).

ATP-binding positions include Ala-13 to Ser-21 and Ala-40. Tyr-91 and Ser-96 together coordinate L-citrulline. Residue Gly-121 coordinates ATP. L-aspartate contacts are provided by Thr-123, Asn-127, and Asp-128. Residue Asn-127 participates in L-citrulline binding. The L-citrulline site is built by Arg-131, Ser-182, Ser-191, Glu-267, and Tyr-279.

This sequence belongs to the argininosuccinate synthase family. Type 1 subfamily. In terms of assembly, homotetramer.

The protein resides in the cytoplasm. It catalyses the reaction L-citrulline + L-aspartate + ATP = 2-(N(omega)-L-arginino)succinate + AMP + diphosphate + H(+). Its pathway is amino-acid biosynthesis; L-arginine biosynthesis; L-arginine from L-ornithine and carbamoyl phosphate: step 2/3. In Mesorhizobium japonicum (strain LMG 29417 / CECT 9101 / MAFF 303099) (Mesorhizobium loti (strain MAFF 303099)), this protein is Argininosuccinate synthase.